A 164-amino-acid polypeptide reads, in one-letter code: Cyclic pyranopterin monophosphate synthase (164 aa).

Substrate contacts are provided by residues 73–75 (LCH) and 111–112 (ME). Residue D126 is part of the active site.

This sequence belongs to the MoaC family. Homohexamer; trimer of dimers.

The catalysed reaction is (8S)-3',8-cyclo-7,8-dihydroguanosine 5'-triphosphate = cyclic pyranopterin phosphate + diphosphate. It functions in the pathway cofactor biosynthesis; molybdopterin biosynthesis. Catalyzes the conversion of (8S)-3',8-cyclo-7,8-dihydroguanosine 5'-triphosphate to cyclic pyranopterin monophosphate (cPMP). This chain is Cyclic pyranopterin monophosphate synthase, found in Herpetosiphon aurantiacus (strain ATCC 23779 / DSM 785 / 114-95).